Here is a 230-residue protein sequence, read N- to C-terminus: Thymidylate kinase (230 aa).

Residue 20-27 (GGEGSGKS) participates in ATP binding.

Belongs to the thymidylate kinase family.

It carries out the reaction dTMP + ATP = dTDP + ADP. Its function is as follows. Phosphorylation of dTMP to form dTDP in both de novo and salvage pathways of dTTP synthesis. The protein is Thymidylate kinase of Nitrobacter winogradskyi (strain ATCC 25391 / DSM 10237 / CIP 104748 / NCIMB 11846 / Nb-255).